A 423-amino-acid polypeptide reads, in one-letter code: Putative competence-damage inducible protein (423 aa).

Belongs to the CinA family.

The protein is Putative competence-damage inducible protein of Streptococcus pyogenes serotype M1.